Reading from the N-terminus, the 560-residue chain is MKAAYNYRATKTACSDRQVLILGTSWADPQPGTMEEIRISIVNDKATRNKRNIEEETDLSPPPKKLRSAVFLCSTPSSAPHCSQNVEVFDEFDDSLLEASSDESDSPLHMTLVQIEELLEDDCDYAAEPPRWDEESDSVGFLQELAVPNGSQSDLVELRNLNSPLAGEQSDSSQTLTEETVCSQDTSNYAAMAPSPCWSNISTAGQNEEAGGNVSTTTSPVLHKHEMDRGSRDSDICSTLSSSHLPGDLKVVDEISETSDIPFDGDIDELLTLSPGDTTSSEEDKITSESTPILSKLESVPVVHSHSEAFCKSSSSLQLPETSLASSTEPSPSLQLSASSVTAMNGQNNSNKVPPPTSDTAPGPQLGTDTNSQKSKGQKVEPKKNKPIEQIGLKQGGKSFAAPVDHPVKENLGQTSKEQVAASIGCKKKVNPSPLQEKKHGAVPTKPRAACRPQISNSELEKNRNIYRDRVMMHLEVHSISEEPNYELAYLLNETSRENPTWQHPSDYTKRNYYVRRQPAPCSLNDWVMRNGGHSIQRFHGLPCTFKRSPMPGVLPTGPT.

Disordered stretches follow at residues serine 259–proline 292 and serine 313–phenylalanine 400. The segment covering serine 313–lysine 352 has biased composition (polar residues). The segment covering glutamine 378–proline 387 has biased composition (basic and acidic residues).

The protein localises to the nucleus. The polypeptide is S100P-binding protein (s100pbp) (Xenopus laevis (African clawed frog)).